A 527-amino-acid polypeptide reads, in one-letter code: Amine oxidase [flavin-containing] A (527 aa).

Position 1 is an N-acetylmethionine (methionine 1). Residues 1–497 (MERQEKANNA…RTFWERNLPS (497 aa)) are Cytoplasmic-facing. Serine 383 bears the Phosphoserine mark. Residue cysteine 406 is modified to S-8alpha-FAD cysteine. A helical; Anchor for type IV membrane protein membrane pass occupies residues 498–518 (VTGLLKIIGFSTSVTALWLAV). Residues 519–527 (YKFRLLTRS) are Mitochondrial intermembrane-facing. The tract at residues 520-522 (KFR) is interaction with membrane phospholipid headgroups.

The protein belongs to the flavin monoamine oxidase family. Monomer, homo- or heterodimer (containing two subunits of similar size). Each subunit contains a covalently bound flavin. Enzymatically active as monomer. FAD is required as a cofactor.

Its subcellular location is the mitochondrion outer membrane. The catalysed reaction is a secondary aliphatic amine + O2 + H2O = a primary amine + an aldehyde + H2O2. It carries out the reaction a primary methyl amine + O2 + H2O = an aldehyde + H2O2 + NH4(+). The enzyme catalyses (R)-adrenaline + O2 + H2O = (R)-3,4-dihydroxymandelaldehyde + methylamine + H2O2. It catalyses the reaction dopamine + O2 + H2O = 3,4-dihydroxyphenylacetaldehyde + H2O2 + NH4(+). The catalysed reaction is tyramine + O2 + H2O = (4-hydroxyphenyl)acetaldehyde + H2O2 + NH4(+). It carries out the reaction (R)-noradrenaline + O2 + H2O = (R)-3,4-dihydroxymandelaldehyde + H2O2 + NH4(+). The enzyme catalyses serotonin + O2 + H2O = (5-hydroxyindol-3-yl)acetaldehyde + H2O2 + NH4(+). It catalyses the reaction kynuramine + O2 + H2O = 3-(2-aminophenyl)-3-oxopropanal + H2O2 + NH4(+). The catalysed reaction is tryptamine + O2 + H2O = indole-3-acetaldehyde + H2O2 + NH4(+). It carries out the reaction 2-phenylethylamine + O2 + H2O = 2-phenylacetaldehyde + H2O2 + NH4(+). Its function is as follows. Catalyzes the oxidative deamination of primary and some secondary amine such as neurotransmitters, with concomitant reduction of oxygen to hydrogen peroxide and has important functions in the metabolism of neuroactive and vasoactive amines in the central nervous system and peripheral tissues. Preferentially oxidizes serotonin. Also catalyzes the oxidative deamination of kynuramine to 3-(2-aminophenyl)-3-oxopropanal that can spontaneously condense to 4-hydroxyquinoline. The protein is Amine oxidase [flavin-containing] A of Sus scrofa (Pig).